Here is a 310-residue protein sequence, read N- to C-terminus: tRNA dimethylallyltransferase (310 aa).

An ATP-binding site is contributed by Gly9–Thr16. Thr11–Thr16 serves as a coordination point for substrate. The tract at residues Asp34 to Gln37 is interaction with substrate tRNA.

It belongs to the IPP transferase family. Monomer. Mg(2+) serves as cofactor.

The catalysed reaction is adenosine(37) in tRNA + dimethylallyl diphosphate = N(6)-dimethylallyladenosine(37) in tRNA + diphosphate. Functionally, catalyzes the transfer of a dimethylallyl group onto the adenine at position 37 in tRNAs that read codons beginning with uridine, leading to the formation of N6-(dimethylallyl)adenosine (i(6)A). The polypeptide is tRNA dimethylallyltransferase (Syntrophomonas wolfei subsp. wolfei (strain DSM 2245B / Goettingen)).